The following is a 159-amino-acid chain: Phosphopantetheine adenylyltransferase (159 aa).

Position 16 (histidine 16) interacts with ATP. The substrate site is built by lysine 40, methionine 72, and arginine 86. ATP contacts are provided by residues 87–89, glutamate 97, and 122–128; these read GLR and YQYLSAS.

This sequence belongs to the bacterial CoaD family. Homohexamer. Mg(2+) is required as a cofactor.

It localises to the cytoplasm. The enzyme catalyses (R)-4'-phosphopantetheine + ATP + H(+) = 3'-dephospho-CoA + diphosphate. It participates in cofactor biosynthesis; coenzyme A biosynthesis; CoA from (R)-pantothenate: step 4/5. Its function is as follows. Reversibly transfers an adenylyl group from ATP to 4'-phosphopantetheine, yielding dephospho-CoA (dPCoA) and pyrophosphate. The sequence is that of Phosphopantetheine adenylyltransferase from Dehalococcoides mccartyi (strain ATCC BAA-2100 / JCM 16839 / KCTC 5957 / BAV1).